The primary structure comprises 337 residues: 1-aminocyclopropane-1-carboxylate deaminase (337 aa).

N6-(pyridoxal phosphate)lysine is present on lysine 50. The Nucleophile role is filled by serine 77.

The protein belongs to the ACC deaminase/D-cysteine desulfhydrase family. In terms of assembly, homotrimer. Pyridoxal 5'-phosphate is required as a cofactor.

The enzyme catalyses 1-aminocyclopropane-1-carboxylate + H2O = 2-oxobutanoate + NH4(+). Its function is as follows. Catalyzes a cyclopropane ring-opening reaction, the irreversible conversion of 1-aminocyclopropane-1-carboxylate (ACC) to ammonia and alpha-ketobutyrate. Allows growth on ACC as a nitrogen source. This Allorhizobium ampelinum (strain ATCC BAA-846 / DSM 112012 / S4) (Agrobacterium vitis (strain S4)) protein is 1-aminocyclopropane-1-carboxylate deaminase.